Reading from the N-terminus, the 555-residue chain is Urocanate hydratase (555 aa).

Residues 51-52 (GG), Gln-129, 175-177 (GMG), Glu-195, 241-242 (NA), 262-266 (QTSAH), 272-273 (YL), and Tyr-321 each bind NAD(+). Residue Cys-409 is part of the active site. An NAD(+)-binding site is contributed by Gly-491.

This sequence belongs to the urocanase family. Requires NAD(+) as cofactor.

The protein localises to the cytoplasm. It carries out the reaction 4-imidazolone-5-propanoate = trans-urocanate + H2O. Its pathway is amino-acid degradation; L-histidine degradation into L-glutamate; N-formimidoyl-L-glutamate from L-histidine: step 2/3. In terms of biological role, catalyzes the conversion of urocanate to 4-imidazolone-5-propionate. The protein is Urocanate hydratase of Hyphomonas neptunium (strain ATCC 15444).